Consider the following 513-residue polypeptide: Putative thymidine phosphorylase (513 aa).

Belongs to the thymidine/pyrimidine-nucleoside phosphorylase family. Type 2 subfamily.

It catalyses the reaction thymidine + phosphate = 2-deoxy-alpha-D-ribose 1-phosphate + thymine. The sequence is that of Putative thymidine phosphorylase from Rhodopseudomonas palustris (strain BisB18).